Consider the following 338-residue polypeptide: Anthranilate phosphoribosyltransferase (338 aa).

5-phospho-alpha-D-ribose 1-diphosphate contacts are provided by residues G81, 84–85 (GD), T89, 91–94 (NIST), 109–117 (KHGNRNLSS), and A121. Anthranilate is bound at residue G81. S93 contacts Mg(2+). Anthranilate is bound at residue N112. R167 is an anthranilate binding site. The Mg(2+) site is built by D226 and E227.

Belongs to the anthranilate phosphoribosyltransferase family. As to quaternary structure, homodimer. The cofactor is Mg(2+).

It carries out the reaction N-(5-phospho-beta-D-ribosyl)anthranilate + diphosphate = 5-phospho-alpha-D-ribose 1-diphosphate + anthranilate. It participates in amino-acid biosynthesis; L-tryptophan biosynthesis; L-tryptophan from chorismate: step 2/5. In terms of biological role, catalyzes the transfer of the phosphoribosyl group of 5-phosphorylribose-1-pyrophosphate (PRPP) to anthranilate to yield N-(5'-phosphoribosyl)-anthranilate (PRA). The protein is Anthranilate phosphoribosyltransferase of Cereibacter sphaeroides (strain ATCC 17029 / ATH 2.4.9) (Rhodobacter sphaeroides).